Here is a 192-residue protein sequence, read N- to C-terminus: E3 ubiquitin-protein ligase RNF183 (192 aa).

Over 1-161 (MAEQQGRELE…RECFRNPQFR (161 aa)) the chain is Cytoplasmic. Residues 13–60 (CPVCWNPFNNTFHTPKMLDCCHSFCVECLAHLSLVTPARRRLLCPLCR) form an RING-type zinc finger. Residues 162-182 (IFAYLMAVILSVTLLLIFSIF) traverse the membrane as a helical; Anchor for type IV membrane protein segment. Over 183 to 192 (WTKQFLWGVG) the chain is Lumenal.

Interacts with FATE1. Interacts with SEC16A. Interacts with BCL2L1. Autoubiquitinated (in vitro). As to expression, kidney and testis.

It localises to the endoplasmic reticulum membrane. The protein resides in the endoplasmic reticulum. Its subcellular location is the golgi apparatus. The protein localises to the cis-Golgi network membrane. It is found in the lysosome membrane. The catalysed reaction is S-ubiquitinyl-[E2 ubiquitin-conjugating enzyme]-L-cysteine + [acceptor protein]-L-lysine = [E2 ubiquitin-conjugating enzyme]-L-cysteine + N(6)-ubiquitinyl-[acceptor protein]-L-lysine.. The protein operates within protein modification; protein ubiquitination. In terms of biological role, acts as an E3 ubiquitin ligase catalyzing the covalent attachment of ubiquitin moieties onto substrate proteins. Triggers apoptosis in response to prolonged ER stress by mediating the polyubiquitination and subsequent proteasomal degradation of BCL2L1. May collaborate with FATE1 to restrain BIK protein levels thus regulating apoptotic signaling. The protein is E3 ubiquitin-protein ligase RNF183 (RNF183) of Homo sapiens (Human).